Reading from the N-terminus, the 325-residue chain is Psp operon transcriptional activator (325 aa).

A Sigma-54 factor interaction domain is found at 15–237 (FLEVLEQVSH…ELKNVVERSV (223 aa)). Residues 36-43 (GERGTGKE) and 99-108 (ADGGTLFLDE) each bind ATP. The H-T-H motif DNA-binding region spans 302 to 321 (QKRAAELLGLTYHQFRALLK).

As to quaternary structure, forms a complex with PspA, which is composed of around 6 PspF subunits and 6 PspA subunits.

The protein resides in the cytoplasm. ATPase activity is inhibited by interaction with PspA. Under inducing conditions, the interaction is disrupted, allowing activation of psp transcription. Transcriptional activator for the phage shock protein (psp) operon (pspABCDE) and pspG gene. The protein is Psp operon transcriptional activator (pspF) of Escherichia coli (strain K12).